The following is a 258-amino-acid chain: Thiazole synthase (258 aa).

K98 functions as the Schiff-base intermediate with DXP in the catalytic mechanism. 1-deoxy-D-xylulose 5-phosphate-binding positions include G159, 185–186, and 207–208; these read AG and NT.

Belongs to the ThiG family. In terms of assembly, homotetramer. Forms heterodimers with either ThiH or ThiS.

Its subcellular location is the cytoplasm. The enzyme catalyses [ThiS sulfur-carrier protein]-C-terminal-Gly-aminoethanethioate + 2-iminoacetate + 1-deoxy-D-xylulose 5-phosphate = [ThiS sulfur-carrier protein]-C-terminal Gly-Gly + 2-[(2R,5Z)-2-carboxy-4-methylthiazol-5(2H)-ylidene]ethyl phosphate + 2 H2O + H(+). The protein operates within cofactor biosynthesis; thiamine diphosphate biosynthesis. Its function is as follows. Catalyzes the rearrangement of 1-deoxy-D-xylulose 5-phosphate (DXP) to produce the thiazole phosphate moiety of thiamine. Sulfur is provided by the thiocarboxylate moiety of the carrier protein ThiS. In vitro, sulfur can be provided by H(2)S. In Bacillus cereus (strain ZK / E33L), this protein is Thiazole synthase.